We begin with the raw amino-acid sequence, 87 residues long: Putative protein KleG (87 aa).

2 disordered regions span residues 1 to 23 and 61 to 87; these read MRHS…WPSS and IPTT…IFSR. Positions 68 to 78 are enriched in basic residues; it reads RGRRPQRHRPS.

The sequence is that of Putative protein KleG (kleG) from Escherichia coli.